The primary structure comprises 349 residues: Interferon-stimulated 20 kDa exonuclease-like 2 (349 aa).

2 disordered regions span residues 1-100 (MSTL…AAVP) and 126-166 (ALPK…KYSG). The span at 14–23 (PPKKALEGNA) shows a compositional bias: basic and acidic residues. Residues 24–47 (KHRKFVKKRRLLERKGFLNKKKQP) show a composition bias toward basic residues. A compositionally biased stretch (basic and acidic residues) spans 54 to 66 (LHSEPSQKGETPR). The span at 70-87 (TWKATPLPKKKTTAASSS) shows a compositional bias: low complexity. Residues 130–142 (IKSHPTRPQKKGS) are compositionally biased toward basic residues. One can recognise an Exonuclease domain in the interval 175-331 (MVAIDCEMVG…EDAQATMELY (157 aa)).

The protein resides in the nucleus. Its subcellular location is the nucleolus. Functionally, 3'-&gt; 5'-exoribonuclease involved in ribosome biogenesis in the processing of the 12S pre-rRNA. Displays a strong specificity for a 3'-end containing a free hydroxyl group. In Bos taurus (Bovine), this protein is Interferon-stimulated 20 kDa exonuclease-like 2 (ISG20L2).